The following is a 513-amino-acid chain: GMP synthase [glutamine-hydrolyzing] (513 aa).

The Glutamine amidotransferase type-1 domain maps to 3–200 (SVLVLDFGSQ…LLNIAGITPD (198 aa)). Catalysis depends on C80, which acts as the Nucleophile. Active-site residues include H174 and E176. The GMPS ATP-PPase domain occupies 201–388 (WSSKSFIDHQ…LGIAEDILMR (188 aa)). 228 to 234 (SGGVDST) provides a ligand contact to ATP.

In terms of assembly, homodimer.

It catalyses the reaction XMP + L-glutamine + ATP + H2O = GMP + L-glutamate + AMP + diphosphate + 2 H(+). Its pathway is purine metabolism; GMP biosynthesis; GMP from XMP (L-Gln route): step 1/1. Catalyzes the synthesis of GMP from XMP. The sequence is that of GMP synthase [glutamine-hydrolyzing] from Chlorobium phaeovibrioides (strain DSM 265 / 1930) (Prosthecochloris vibrioformis (strain DSM 265)).